A 198-amino-acid polypeptide reads, in one-letter code: Alpha1-proteinase inhibitor-degradation deficient protein 37 (198 aa).

S79 is subject to Phosphoserine.

The protein resides in the cytoplasm. In terms of biological role, involved in ER-associated protein degradation (ERAD). This Saccharomyces cerevisiae (strain ATCC 204508 / S288c) (Baker's yeast) protein is Alpha1-proteinase inhibitor-degradation deficient protein 37 (ADD37).